Reading from the N-terminus, the 300-residue chain is Acetylglutamate kinase (300 aa).

Substrate contacts are provided by residues 68 to 69, Arg90, and Asn195; that span reads GG.

This sequence belongs to the acetylglutamate kinase family. ArgB subfamily.

It localises to the cytoplasm. It catalyses the reaction N-acetyl-L-glutamate + ATP = N-acetyl-L-glutamyl 5-phosphate + ADP. It functions in the pathway amino-acid biosynthesis; L-arginine biosynthesis; N(2)-acetyl-L-ornithine from L-glutamate: step 2/4. Catalyzes the ATP-dependent phosphorylation of N-acetyl-L-glutamate. The protein is Acetylglutamate kinase of Stutzerimonas stutzeri (strain A1501) (Pseudomonas stutzeri).